Reading from the N-terminus, the 711-residue chain is MASEAPSPPSPSPPPPASPEPELAQLRRKVEKLERELRSCRRQVREVEKLLQHTERLYRNAESDNQELRTQVEELSKILHCGKNEDNPKSDVEVQTESQAPWAISDYYYQTCYNDDSLPSKETELCVQQSQCAQASALDPQDESHIDSGSYAGADATEGVSHRQEDAVTSDSQESVSALAEGPALEGSSLAESLRAAAEAAVSQTGFTYDESTGLYFDHSTGFYYDSENQLYYDPSTGIYYYCDVESGRYQFHSRVDLQPYQTSSTKPNRERRLKKRRKEPGFYTANEEKDLSSEDQKVCSVEYINCSEDEHSGNVKKKARTDTSHKSSPLQLTVAVSGDTVESPGDDNSASSKDERIGESESEPEEGEITDSQSEKSYDGDSSSGDRETSEESDDEDEERIWPPCIRVIVIRSPVLQMGSLFIITAVSPATIGREKDMEHTVRIPEVAVSKFHAEVYFDHDLQSYVLVDQGSQNGTIVNGKQILQPKTKCDPYVLEHGDEVKIGETVLSFHIHPGSETCDGCEPGQVRAHLRLDRKDEPLVGPALSKEEKELERRKALKKIRVKYGLQNTDYEAEKALKNPKYKDRAGKRREQVGSEGTFQRDDAPASVHSEITDSNKGRKMLEKMGWKRGEGLGKDGGGMKTPIQLQLRRTHAGLGTGKLSSIDDVHLIQNKSKKHWDKARERFAETFTENKPRKETPGAVPWVTGTAE.

Residues 1–19 (MASEAPSPPSPSPPPPASP) show a composition bias toward pro residues. Disordered stretches follow at residues 1–23 (MASE…EPEL), 137–184 (ALDP…EGPA), 260–297 (PYQT…SEDQ), and 311–400 (EHSG…EDEE). Residue A2 is modified to N-acetylalanine. A phosphoserine mark is found at S7 and S12. The stretch at 19 to 85 (PEPELAQLRR…SKILHCGKNE (67 aa)) forms a coiled coil. Positions 167-176 (AVTSDSQESV) are enriched in polar residues. Basic residues predominate over residues 270–279 (RERRLKKRRK). Basic and acidic residues predominate over residues 287-297 (NEEKDLSSEDQ). A Phosphoserine modification is found at S344. Residues 361–370 (SESEPEEGEI) are compositionally biased toward acidic residues. The segment covering 374–391 (QSEKSYDGDSSSGDRETS) has biased composition (basic and acidic residues). One can recognise an FHA domain in the interval 431–484 (ATIGREKDMEHTVRIPEVAVSKFHAEVYFDHDLQSYVLVDQGSQNGTIVNGKQI). Basic and acidic residues-rich tracts occupy residues 579–606 (LKNP…RDDA) and 613–623 (EITDSNKGRKM). Positions 579–623 (LKNPKYKDRAGKRREQVGSEGTFQRDDAPASVHSEITDSNKGRKM) are disordered. One can recognise a G-patch domain in the interval 616 to 662 (DSNKGRKMLEKMGWKRGEGLGKDGGGMKTPIQLQLRRTHAGLGTGKL). An N6-acetyllysine modification is found at K661. Residues 690 to 699 (FTENKPRKET) show a composition bias toward basic and acidic residues. The interval 690–711 (FTENKPRKETPGAVPWVTGTAE) is disordered.

In terms of assembly, interacts with the secreted angiogenic factor TNFSF12.

The protein localises to the cytoplasm. It is found in the secreted. Functionally, promotes angiogenesis and the proliferation of endothelial cells. Able to bind to endothelial cells and promote cell proliferation, suggesting that it may act in an autocrine fashion. The polypeptide is Angiogenic factor with G patch and FHA domains 1 (Aggf1) (Mus musculus (Mouse)).